A 98-amino-acid chain; its full sequence is PE family immunomodulator PE35 (98 aa).

The PE domain occupies 1–90 (MEKMSHDPIA…DVARTYSQID (90 aa)).

It belongs to the mycobacterial PE family. As to quaternary structure, interacts with PPE68. PE35/PPE68 complex interacts with human TLR2.

The protein resides in the secreted. The protein localises to the cell surface. Functionally, plays a major role in RD1-associated pathogenesis, and may contribute to the establishment and maintenance of M.tuberculosis infection. Together with PPE68, stimulates the secretion of IL-10 and MCP-1 from human macrophages, via the interaction with human Toll-like receptor 2 (TLR2). The sequence is that of PE family immunomodulator PE35 (PE35) from Mycobacterium tuberculosis (strain CDC 1551 / Oshkosh).